A 178-amino-acid polypeptide reads, in one-letter code: ATP synthase subunit delta (178 aa).

This sequence belongs to the ATPase delta chain family. In terms of assembly, F-type ATPases have 2 components, F(1) - the catalytic core - and F(0) - the membrane proton channel. F(1) has five subunits: alpha(3), beta(3), gamma(1), delta(1), epsilon(1). F(0) has three main subunits: a(1), b(2) and c(10-14). The alpha and beta chains form an alternating ring which encloses part of the gamma chain. F(1) is attached to F(0) by a central stalk formed by the gamma and epsilon chains, while a peripheral stalk is formed by the delta and b chains.

The protein localises to the cell membrane. In terms of biological role, f(1)F(0) ATP synthase produces ATP from ADP in the presence of a proton or sodium gradient. F-type ATPases consist of two structural domains, F(1) containing the extramembraneous catalytic core and F(0) containing the membrane proton channel, linked together by a central stalk and a peripheral stalk. During catalysis, ATP synthesis in the catalytic domain of F(1) is coupled via a rotary mechanism of the central stalk subunits to proton translocation. Functionally, this protein is part of the stalk that links CF(0) to CF(1). It either transmits conformational changes from CF(0) to CF(1) or is implicated in proton conduction. This chain is ATP synthase subunit delta, found in Streptococcus pyogenes serotype M49 (strain NZ131).